Consider the following 102-residue polypeptide: Large ribosomal subunit protein uL24 (102 aa).

It belongs to the universal ribosomal protein uL24 family. As to quaternary structure, part of the 50S ribosomal subunit.

One of two assembly initiator proteins, it binds directly to the 5'-end of the 23S rRNA, where it nucleates assembly of the 50S subunit. In terms of biological role, one of the proteins that surrounds the polypeptide exit tunnel on the outside of the subunit. The protein is Large ribosomal subunit protein uL24 of Cupriavidus necator (strain ATCC 17699 / DSM 428 / KCTC 22496 / NCIMB 10442 / H16 / Stanier 337) (Ralstonia eutropha).